Consider the following 286-residue polypeptide: Shikimate dehydrogenase (NADP(+)) (286 aa).

Residues 19 to 21 (SLS) and T66 contribute to the shikimate site. The active-site Proton acceptor is the K70. Shikimate is bound by residues N91 and D107. NADP(+) contacts are provided by residues 129 to 133 (GSGGA) and L229. Position 231 (Y231) interacts with shikimate. Residue G252 participates in NADP(+) binding.

This sequence belongs to the shikimate dehydrogenase family. Homodimer.

It carries out the reaction shikimate + NADP(+) = 3-dehydroshikimate + NADPH + H(+). The protein operates within metabolic intermediate biosynthesis; chorismate biosynthesis; chorismate from D-erythrose 4-phosphate and phosphoenolpyruvate: step 4/7. In terms of biological role, involved in the biosynthesis of the chorismate, which leads to the biosynthesis of aromatic amino acids. Catalyzes the reversible NADPH linked reduction of 3-dehydroshikimate (DHSA) to yield shikimate (SA). This is Shikimate dehydrogenase (NADP(+)) from Prochlorococcus marinus (strain MIT 9312).